The following is a 360-amino-acid chain: 3-dehydroquinate synthase (360 aa).

Residues 71-76, 105-109, 129-130, K142, K151, and 169-172 each bind NAD(+); these read DGEQFK, GVIGD, TT, and FLKT. E184, H247, and H264 together coordinate Zn(2+).

It belongs to the sugar phosphate cyclases superfamily. Dehydroquinate synthase family. Requires NAD(+) as cofactor. It depends on Co(2+) as a cofactor. Zn(2+) is required as a cofactor.

The protein resides in the cytoplasm. It catalyses the reaction 7-phospho-2-dehydro-3-deoxy-D-arabino-heptonate = 3-dehydroquinate + phosphate. The protein operates within metabolic intermediate biosynthesis; chorismate biosynthesis; chorismate from D-erythrose 4-phosphate and phosphoenolpyruvate: step 2/7. Its function is as follows. Catalyzes the conversion of 3-deoxy-D-arabino-heptulosonate 7-phosphate (DAHP) to dehydroquinate (DHQ). In Buchnera aphidicola subsp. Schizaphis graminum (strain Sg), this protein is 3-dehydroquinate synthase.